We begin with the raw amino-acid sequence, 197 residues long: Holliday junction branch migration complex subunit RuvA (197 aa).

The domain I stretch occupies residues 1–63; that stretch reads MYAYLKGIIT…EDAHLLYGFR (63 aa). The domain II stretch occupies residues 64–142; the sequence is SEDEKKLFLS…VAGDGLPAKV (79 aa). The segment at 143 to 147 is flexible linker; that stretch reads AVQAS. A domain III region spans residues 148–197; sequence AENQELEEAMEAMLALGYKATELKKIKKFFEGTTDTAENYIKSALKMLVK.

It belongs to the RuvA family. In terms of assembly, homotetramer. Forms an RuvA(8)-RuvB(12)-Holliday junction (HJ) complex. HJ DNA is sandwiched between 2 RuvA tetramers; dsDNA enters through RuvA and exits via RuvB. An RuvB hexamer assembles on each DNA strand where it exits the tetramer. Each RuvB hexamer is contacted by two RuvA subunits (via domain III) on 2 adjacent RuvB subunits; this complex drives branch migration. In the full resolvosome a probable DNA-RuvA(4)-RuvB(12)-RuvC(2) complex forms which resolves the HJ.

Its subcellular location is the cytoplasm. In terms of biological role, the RuvA-RuvB-RuvC complex processes Holliday junction (HJ) DNA during genetic recombination and DNA repair, while the RuvA-RuvB complex plays an important role in the rescue of blocked DNA replication forks via replication fork reversal (RFR). RuvA specifically binds to HJ cruciform DNA, conferring on it an open structure. The RuvB hexamer acts as an ATP-dependent pump, pulling dsDNA into and through the RuvAB complex. HJ branch migration allows RuvC to scan DNA until it finds its consensus sequence, where it cleaves and resolves the cruciform DNA. In Streptococcus pneumoniae serotype 2 (strain D39 / NCTC 7466), this protein is Holliday junction branch migration complex subunit RuvA.